Here is an 810-residue protein sequence, read N- to C-terminus: Calpain-3 (810 aa).

The span at 9 to 27 (VAQQTAAGSVPSTTSTTTE) shows a compositional bias: low complexity. Residues 9–31 (VAQQTAAGSVPSTTSTTTEGTGG) form a disordered region. One can recognise a Calpain catalytic domain in the interval 68–410 (LYEDPDFPPN…FTKLEICNLT (343 aa)). Active-site residues include C123, H327, and N351. A domain III region spans residues 411–579 (PDTLEADKLQ…KRSLSEEVEN (169 aa)). The segment at 578–639 (ENMIEADRPS…SAKAREKSEE (62 aa)) is disordered. The tract at residues 580 to 638 (MIEADRPSKKKKGKPIIFVSDRANSNKELTTDEDAGKDGEKTHVDEKKRSSAKAREKSE) is linker. The span at 613-639 (DAGKDGEKTHVDEKKRSSAKAREKSEE) shows a compositional bias: basic and acidic residues. 4 consecutive EF-hand domains span residues 638-672 (EEETQFRNIFRQIAGDDMEICREELRNVLNNVVKK), 681-714 (FELESSRSMIALMDTDGSGKINFDEFRHLWDKIK), 711-746 (DKIKSWQKIFKHYDADHSGTINSYEMRNAVKDAGFR), and 776-810 (VRLDAMFRAFHAFDKDGDGIIKLNVLEWLQLTMYA). Positions 639-809 (EETQFRNIFR…VLEWLQLTMY (171 aa)) are domain IV. Residues A651, D654, E656, E661, D694, D696, S698, K700, E705, D724, D726, S728, T730, E735, D789, D791, D793, and I795 each contribute to the Ca(2+) site.

Belongs to the peptidase C2 family. As to quaternary structure, homodimer; via EF-hand domain 4. Interacts with TTN/titin. Interacts with CMYA5; this interaction, which results in CMYA5 proteolysis, may protect CAPN3 from autolysis. Interacts with SIMC1. Interacts with UTP25; the interaction is required for CAPN3 translocation to the nucleolus. As to expression, skeletal muscle. Low levels in spleen, intestine and bone.

It localises to the cytoplasm. It is found in the nucleus. The protein resides in the nucleolus. The enzyme catalyses Broad endopeptidase activity.. Activated by micromolar concentrations of calcium and inhibited by calpastatin. In terms of biological role, calcium-regulated non-lysosomal thiol-protease. Proteolytically cleaves CTBP1. Mediates, with UTP25, the proteasome-independent degradation of p53/TP53. This Gallus gallus (Chicken) protein is Calpain-3 (CAPN3).